A 129-amino-acid polypeptide reads, in one-letter code: Small ribosomal subunit protein bS6 (129 aa).

The tract at residues 100 to 129 is disordered; the sequence is SIMLKQKEERAPRREERSEAKPEAKSEAAE. The span at 104-129 shows a compositional bias: basic and acidic residues; sequence KQKEERAPRREERSEAKPEAKSEAAE.

The protein belongs to the bacterial ribosomal protein bS6 family.

Functionally, binds together with bS18 to 16S ribosomal RNA. This chain is Small ribosomal subunit protein bS6, found in Vibrio parahaemolyticus serotype O3:K6 (strain RIMD 2210633).